The following is a 149-amino-acid chain: D-aminoacyl-tRNA deacylase (149 aa).

A Gly-cisPro motif, important for rejection of L-amino acids motif is present at residues 139-140; that stretch reads GP.

This sequence belongs to the DTD family. In terms of assembly, homodimer.

The protein localises to the cytoplasm. The catalysed reaction is glycyl-tRNA(Ala) + H2O = tRNA(Ala) + glycine + H(+). It catalyses the reaction a D-aminoacyl-tRNA + H2O = a tRNA + a D-alpha-amino acid + H(+). Functionally, an aminoacyl-tRNA editing enzyme that deacylates mischarged D-aminoacyl-tRNAs. Also deacylates mischarged glycyl-tRNA(Ala), protecting cells against glycine mischarging by AlaRS. Acts via tRNA-based rather than protein-based catalysis; rejects L-amino acids rather than detecting D-amino acids in the active site. By recycling D-aminoacyl-tRNA to D-amino acids and free tRNA molecules, this enzyme counteracts the toxicity associated with the formation of D-aminoacyl-tRNA entities in vivo and helps enforce protein L-homochirality. This chain is D-aminoacyl-tRNA deacylase (dtd1), found in Schizosaccharomyces pombe (strain 972 / ATCC 24843) (Fission yeast).